Consider the following 4243-residue polypeptide: MGHLWLLGIWGLCGLLLCAADPSTDGSQIIPKVTEIIPKYGSINGATRLTIRGEGFSQANQFNYGVDNAELGNSVQLISSFQSITCDVEKDASHSTQITCYTRAMPEDSYTVRVSVDGVPVTENNTCKGHINSWECTFNAKSFRTPTIRSITPLSGTPGTLITIQGRIFTDVYGSNIALSSNGKNVRILRVYIGGMPCELLIPQSDNLYGLKLDHPNGDMGSMVCKTTGTFIGHHNVSFILDNDYGRSFPQKMAYFVSSLNKIAMFQTYAEVTMIFPSQGSIRGGTTLTISGRFFDQTDFPVRVLVGGEPCDILNVTENSICCKTPPKPHILKTVYPGGRGLKLEVWNNSRPIRLEEILEYNEKTPGYMGASWVDSASYIWLMEQDTFVARFSGFLVAPDSDVYRFYIKGDDRYAIYFSQTGLPEDKVRIAYHSANANSYFSSPTQRSDDIHLQKGKEYYIEILLQEYRLSAFVDVGLYQYRNVYTEQQTGDAVNEEQVIKSQSTILQEVQVITLENWETTNAINEVQKIKVTSPCVEANSCSLYQYRLIYNMEKTVFLPADASEFILQSALNDLWSIKPDTVQVIRTQNPQSYVYMVTFISTRGDFDLLGYEVVEGNNVTLDITEQTKGKPNLETFTLNWDGIASKPLTLWSSEAEFQGAVEEMVSTKCPPQIANFEEGFVVKYFRDYETDFNLEHINRGQKTAETDAYCGRYSLKNPAVLFDSADVKPNRRPYGDILLFPYNQLCLAYKGFLANYIGLKFQYQDNSKITRSTDTQFTYNFAYGNNWTYTCIDLLDLVRTKYTGTNVSLQRISLHKASESQSFYVDVVYIGHTSTISTLDEMPKRRLPALANKGIFLEHFQVNQTKTNGPTMTNQYSVTMTSYNCSYNIPMMAVSFGQIITHETENEFVYRGNNWPGESKIHIQRIQAASPPLSGSFDIQAYGHILKGLPAAVSAADLQFALQSLEGMGRISVTREGTCAGYAWNIKWRSTCGKQNLLQINDSNIIGEKANMTVTRIKEGGLFRQHVLGDLLRTPSQQPQVEVYVNGIPAKCSGDCGFTWDSNITPLVLAISPSQGSYEEGTILTIVGSGFSPSSAVTVSVGPVGCSLLSVDEKELKCQILNGSAGHAPVAVSMADVGLAQNVGGEEFYFVYQSQISHIWPDSGSIAGGTLLTLSGFGFNENSKVLVGNETCNVIEGDLNRITCRTPKKTEGTVDISVTTNGFQATARDAFSYNCLQTPIITDFSPKVRTILGEVNLTIKGYNFGNELTQNMAVYVGGKTCQILHWNFTDIRCLLPKLSPGKHDIYVEVRNWGFASTRDKLNSSIQYVLEVTSMFPQRGSLFGGTEITIRGFGFSTIPAENTVLLGSIPCNVTSSSENVIKCILHSTGNIFRITNNGKDSVHGLGYAWSPPVLNVSVGDTVAWHWQTHPFLRGIGYRIFSVSSPGSVIYDGKGFTSGRQKSTSGSFSYQFTSPGIHYYSSGYVDEAHSIFLQGVINVLPAETRHIPLHLFVGRSEATYAYGGPENLHLGSSVAGCLATEPLCSLNNTRVKNSKRLLFEVSSCFSPSISNITPSTGTVNELITIIGHGFSNLPWANKVTIGSYPCVVEESSEDSITCHIDPQNSMDVGIRETVTLTVYNLGTAINTLSNEFDRRFVLLPNIDLVLPNAGSTTGMTSVTIKGSGFAVSSAGVKVLMGHFPCKVLSVNYTAIECETSPAAQQLVDVDLLIHGVPAQCQGNCTFSYLESITPYITGVFPNSVIGSVKVLIEGEGLGTVLEDIAVFIGNQQFRAIEVNENNITALVTPLPVGHHSVSVVVGSKGLALGNLTVSSPPVASLSPTSGSIGGGTTLVITGNGFYPGNTTVTIGDEPCQIISINPNEVYCRTPAGTTGMVDVKIFVNTIAYPPLLFTYALEDTPFLRGIIPSRGPPGTEIEITGSNFGFEILEISVMINNIQCNVTMANDSVVQCIVGDHAGGTFPVMMHHKTKGSAMSTVVFEYPLNIQNINPSQGSFGGGQTMTVTGTGFNPQNSIILVCGSECAIDRLRSDYTTLLCEIPSNNGTGAEQACEVSVVNGKDLSQSMTPFTYAVSLTPLITAVSPKRGSTAGGTRLTVVGSGFSENMEDVHITIAEAKCDVEYSNKTHIICMTDAHTLSGWAPVCVHIRGVGMAKLDNADFLYVDAWSSNFSWGGKSPPEEGSLVVITKGQTILLDQSTPILKMLLIQGGTLIFDEADIELQAENILITDGGVLQIGTETSPFQHKAVITLHGHLRSPELPVYGAKTLAVREGILDLHGVPVPVTWTRLAHTAKAGERILILQEAVTWKPGDNIVIASTGHRHSQGENEKMTIASVSADGINITLSNPLNYTHLGITVTLPDGTLFEARAEVGILTRNILIRGSDNVEWNNKIPACPDGFDTGEFATQTCLQGKFGEEIGSDQFGGCVMFHAPVPGANMVTGRIEYVEVFHAGQAFRLGRYPIHWHLLGDLQFKSYVRGCAIHQAYNRAVTIHNTHHLLVERNIIYDIKGGAFFIEDGIEHGNILQYNLAVFVQQSTSLLNDDVTPAAFWVTNPNNTIRHNAVAGGTHFGFWYRMNNHPDGPSYDRNICQKRVPLGEFFNNTVHSQGWFGMWIFEEYFPMQTGSCTSTVPAPAIFNSLTTWNCQKGAEWVNGGALQFHNFVMVNNYEAGIETKRILAPYVGGWGETNGAVIKNAKIVGHLDELGMGSAFCTAKGLVLPFSEGLTVSSVHFMNFDRPNCVALGVTSISGVCNDRCGGWSAKFVDVQYSHTPNKAGFRWEHEMVMIDVDGSLTGHKGHTVIPHSSLLDPSHCTQEAEWSIGFPGSVCDASVSFHRLAFNQPSPVSLLEKDVVLSDSFGTSIIPFQKKRLTHMSGWMALIPNANHINWYFKGVDHITNISYTSTFYGFKEEDYVIISHNFTQNPDMFNIIDMRNGSSNPLNWNTSKNGDWHLEANTSTLYYLVSGRNDLHQSQLISGNLDPDVKDVVINFQAYCCILQDCFPVHPPSRKPIPKKRPATYNLWSNDSFWQSSRENNYTVPHPGANVIIPEGTWIVADIDMPSMERLIIWGVLELEDKYNVGAAESSYREVVLNATYISLQGGRLIGGWEDNPFKGDLKIVLRGNHTTQDWALPEGPNQGAKVLGVFGELDLHGIPHSIYKTKLSETAFAGSKVLSLMDAVDWQEGEEIVITTTSYDFHQTETRSIVKILHDHKILILNDSLSYTHFAEKYHVPGTGESYTLAADVGILSRNIKIVGEDYPGWSEDSFGARVLVGSFTENMMTFKGNARISNVEFYHSGQEGFRDSTDPRYAVTFLNLGQIQEHGSSYIRGCAFHHGFSPAIGVFGTDGLDIDDNIIHFTVGEGIRIWGNANRVRGNLIALSVWPGTYQNRKDLSSTLWHAAIEINRGTNTVLQNNVVAGFGRAGYRIDGEPCPGQFNPVEKWFDNEAHGGLYGIYMNQDGLPGCSLIQGFTIWTCWDYGIYFQTTESVHIYNVTLVDNGMAIFPMIYMPAAISHKISSKNVQIKSSLIVGSSPGFNCSDVLTNDDPNIELTAAHRSPRSPSGGRSGICWPTFASAHNMAPRKPHAGIMSYNAISGLLDISGSTFVGFKNVCSGETNVIFITNPLNEDLQHPIHVKNIKLVDTTEQSKIFIHRPDISKVNPSDCVDMVCDAKRKSFLRDIDGSFLGNAGSVIPQAEYEWDGNSQVGIGDYRIPKAMLTFLNGSRIPVTEKAPHKGIIRDSTCKYLPEWQSYQCFGMEYAMMVIESLDPDTETRRLSPVAIMGNGYVDLINGPQDHGWCAGYTCQRRLSLFHSIVALNKSYEVYFTGTSPQNLRLMLLNVDHNKAVLVGIFFSTLQRLDVYVNNLLVCPKTTIWNAQQKHCELNNHLYKDQFLPNLDSTVLGENYFDGTYQMLYLLVKGTIPVEIHTATVIFVSFQLSVATEDDFYTSHNLVKNLALFLKIPSDKIRISKIRGKSLRRKRSMGFIIEIEIGDPPIQFISNGTTGQMQLSELQEIAGSLGQAVILGNISSILGFNISSMSITNPLPSPSDSGWIKVTAQPVERSAFPVHHVAFVSSLLVITQPVAAQPGQPFPQQPSVKATDSDGNCVSVGITALTLRAILKDSNNNQVNGLSGNTTIPFSSCWANYTDLTPLRTGKNYKIEFILDNVVGVESRTFSLLAESVSSSGSSSSSNSKASTVGTYAQIMTVVISCLVGRMWLLEIFMAAVSTLNITLRSY.

A signal peptide spans 1-20 (MGHLWLLGIWGLCGLLLCAA). Residues 21-4210 (DPSTDGSQII…KASTVGTYAQ (4190 aa)) lie on the Extracellular side of the membrane. IPT/TIG domains lie at 31–129 (PKVT…TCKG), 146–255 (PTIR…KMAY), and 270–361 (AEVT…ILEY). O-linked (GalNAc...) threonine glycosylation occurs at threonine 122. One can recognise a PA14 domain in the interval 337 to 492 (PGGRGLKLEV…NVYTEQQTGD (156 aa)). Threonine 445 carries an O-linked (GalNAc...) threonine glycan. IPT/TIG domains follow at residues 1067–1151 (PLVL…EFYF), 1155–1234 (SQIS…AFSY), 1240–1322 (PIIT…RDKL), 1330–1469 (LEVT…SFSY), 1566–1649 (PSIS…TLSN), 1659–1743 (PNID…TFSY), 1749–1828 (PYIT…NLTV), 1831–1910 (PPVA…LFTY), 1916–1997 (PFLR…VFEY), 1999–2085 (LNIQ…PFTY), and 2091–2176 (PLIT…DFLY). O-linked (GalNAc...) threonine glycosylation is found at threonine 1803 and threonine 1839. The region spanning 2184 to 2304 (FSWGGKSPPE…VPVTWTRLAH (121 aa)) is the G8 1 domain. Threonine 2320 carries an O-linked (GalNAc...) threonine glycan. PbH1 repeat units lie at residues 2508 to 2530 (THHL…FIED), 2566 to 2588 (NPNN…WYRM), 2665 to 2687 (GGAL…ETKR), and 2733 to 2756 (SEGL…ALGV). The G8 2 domain occupies 3036–3174 (SFWQSSRENN…HSIYKTKLSE (139 aa)). PbH1 repeat units follow at residues 3293–3315 (KGNA…RDST), 3355–3377 (TDGL…RIWG), 3416–3438 (GTNT…RIDG), 3471–3493 (PGCS…YFQT), and 3527–3548 (SKNV…NCSD). An O-linked (GalNAc...) threonine glycan is attached at threonine 3736. A helical membrane pass occupies residues 4211–4231 (IMTVVISCLVGRMWLLEIFMA). Topologically, residues 4232-4243 (AVSTLNITLRSY) are cytoplasmic.

The protein resides in the membrane. Its subcellular location is the cell projection. It is found in the stereocilium membrane. Component of hair-cell stereocilia coat. Required for normal hearing. In Homo sapiens (Human), this protein is Fibrocystin-L (PKHD1L1).